We begin with the raw amino-acid sequence, 159 residues long: 6,7-dimethyl-8-ribityllumazine synthase (159 aa).

5-amino-6-(D-ribitylamino)uracil contacts are provided by residues Phe22, 57 to 59 (AVE), and 81 to 83 (AVI). 86 to 87 (GT) lines the (2S)-2-hydroxy-3-oxobutyl phosphate pocket. His89 acts as the Proton donor in catalysis. Residue Phe114 participates in 5-amino-6-(D-ribitylamino)uracil binding. Arg128 serves as a coordination point for (2S)-2-hydroxy-3-oxobutyl phosphate.

This sequence belongs to the DMRL synthase family. As to quaternary structure, forms an icosahedral capsid composed of 60 subunits, arranged as a dodecamer of pentamers.

It catalyses the reaction (2S)-2-hydroxy-3-oxobutyl phosphate + 5-amino-6-(D-ribitylamino)uracil = 6,7-dimethyl-8-(1-D-ribityl)lumazine + phosphate + 2 H2O + H(+). It participates in cofactor biosynthesis; riboflavin biosynthesis; riboflavin from 2-hydroxy-3-oxobutyl phosphate and 5-amino-6-(D-ribitylamino)uracil: step 1/2. Its function is as follows. Catalyzes the formation of 6,7-dimethyl-8-ribityllumazine by condensation of 5-amino-6-(D-ribitylamino)uracil with 3,4-dihydroxy-2-butanone 4-phosphate. This is the penultimate step in the biosynthesis of riboflavin. The chain is 6,7-dimethyl-8-ribityllumazine synthase from Shewanella baltica (strain OS155 / ATCC BAA-1091).